A 281-amino-acid chain; its full sequence is uncharacterized protein (281 aa).

Its subcellular location is the plastid. The protein resides in the chloroplast. This is an uncharacterized protein from Euglena gracilis.